A 299-amino-acid polypeptide reads, in one-letter code: MNEFDRVRDYLTDLQDRICAAVEAADGKARFAEDLWKREEGGGGRTRILRDGAVFEQAGIGFSDVSGTRLPPSASAHRPELAGATWRACGVSLVFHPHNPYIPTTHMNVRYFRAERDGEVVAAWFGGGFDLTPFYPFDEDVQHWHRVAQALCEPFGEERYAAHKRWCDEYFFLRHRNETRGVGGLFFDDLGKEFEHDFAYQQAVGNGFLDAYMPIVQRRKDTAYGEREREFQLYRRGRYVEFNLVYDRGTLFGLQSGGRAESILMSLPPRVRWEYGFTPEPGSAEARLADYLIPRDWLG.

Serine 92 contributes to the substrate binding site. 2 residues coordinate a divalent metal cation: histidine 96 and histidine 106. Histidine 106 serves as the catalytic Proton donor. Position 108–110 (asparagine 108–arginine 110) interacts with substrate. Histidine 145 and histidine 175 together coordinate a divalent metal cation. Positions tyrosine 239–glutamate 274 are important for dimerization. Glycine 257 to arginine 259 lines the substrate pocket.

It belongs to the aerobic coproporphyrinogen-III oxidase family. In terms of assembly, homodimer. Requires a divalent metal cation as cofactor.

Its subcellular location is the cytoplasm. It catalyses the reaction coproporphyrinogen III + O2 + 2 H(+) = protoporphyrinogen IX + 2 CO2 + 2 H2O. It participates in porphyrin-containing compound metabolism; protoporphyrin-IX biosynthesis; protoporphyrinogen-IX from coproporphyrinogen-III (O2 route): step 1/1. Functionally, involved in the heme biosynthesis. Catalyzes the aerobic oxidative decarboxylation of propionate groups of rings A and B of coproporphyrinogen-III to yield the vinyl groups in protoporphyrinogen-IX. In Xanthomonas oryzae pv. oryzae (strain MAFF 311018), this protein is Oxygen-dependent coproporphyrinogen-III oxidase.